Consider the following 1034-residue polypeptide: Protein argonaute 2 (1034 aa).

A disordered region spans residues 1-201 (MEHERGGGGR…PMRRPDGGGS (201 aa)). A compositionally biased stretch (gly residues) spans 18–125 (GGRGGGGGDG…ESGGGGGRGG (108 aa)). Residues 172 to 187 (VVRVQPPAPPVAVSRS) are compositionally biased toward low complexity. Positions 391–504 (PVLDLVQKSV…VPIELCDLLE (114 aa)) constitute a PAZ domain. The 302-residue stretch at 688–989 (LLFCPMSDQH…AAYRGRLYYE (302 aa)) folds into the Piwi domain.

It belongs to the argonaute family. Ago subfamily.

In terms of biological role, probably involved in the RNA silencing pathway. May bind to short RNAs such as microRNAs (miRNAs) or short interfering RNAs (siRNAs), and represses the translation of mRNAs which are complementary to them. This Oryza sativa subsp. japonica (Rice) protein is Protein argonaute 2 (AGO2).